Here is a 57-residue protein sequence, read N- to C-terminus: Kunitz-type serine protease inhibitor 2 (57 aa).

The BPTI/Kunitz inhibitor domain maps to 5–55 (CELPAETGLCKAYIRSFHYNLAAQQCLQFIYGGCGGNANRFKTIDECRRTC). 3 cysteine pairs are disulfide-bonded: C5–C55, C14–C38, and C30–C51.

This sequence belongs to the venom Kunitz-type family. Expressed by the venom gland.

It is found in the secreted. Serine protease inhibitor. This Hemachatus haemachatus (Rinkhals) protein is Kunitz-type serine protease inhibitor 2.